A 361-amino-acid chain; its full sequence is Glutamate 5-kinase (361 aa).

Lys-14 is an ATP binding site. Positions 54, 141, and 153 each coordinate substrate. One can recognise a PUA domain in the interval 277–355 (KGAVIINQGA…KGLKPVIHYD (79 aa)).

This sequence belongs to the glutamate 5-kinase family.

Its subcellular location is the cytoplasm. It carries out the reaction L-glutamate + ATP = L-glutamyl 5-phosphate + ADP. The protein operates within amino-acid biosynthesis; L-proline biosynthesis; L-glutamate 5-semialdehyde from L-glutamate: step 1/2. In terms of biological role, catalyzes the transfer of a phosphate group to glutamate to form L-glutamate 5-phosphate. The protein is Glutamate 5-kinase of Chlorobaculum tepidum (strain ATCC 49652 / DSM 12025 / NBRC 103806 / TLS) (Chlorobium tepidum).